Consider the following 1342-residue polypeptide: DNA-directed RNA polymerase subunit beta (1342 aa).

It belongs to the RNA polymerase beta chain family. In terms of assembly, the RNAP catalytic core consists of 2 alpha, 1 beta, 1 beta' and 1 omega subunit. When a sigma factor is associated with the core the holoenzyme is formed, which can initiate transcription.

The enzyme catalyses RNA(n) + a ribonucleoside 5'-triphosphate = RNA(n+1) + diphosphate. Functionally, DNA-dependent RNA polymerase catalyzes the transcription of DNA into RNA using the four ribonucleoside triphosphates as substrates. The sequence is that of DNA-directed RNA polymerase subunit beta from Sodalis glossinidius (strain morsitans).